Here is a 115-residue protein sequence, read N- to C-terminus: Holo-[acyl-carrier-protein] synthase (115 aa).

Mg(2+) is bound by residues aspartate 5 and glutamate 51.

It belongs to the P-Pant transferase superfamily. AcpS family. Requires Mg(2+) as cofactor.

The protein localises to the cytoplasm. It carries out the reaction apo-[ACP] + CoA = holo-[ACP] + adenosine 3',5'-bisphosphate + H(+). Functionally, transfers the 4'-phosphopantetheine moiety from coenzyme A to a Ser of acyl-carrier-protein. In Helicobacter acinonychis (strain Sheeba), this protein is Holo-[acyl-carrier-protein] synthase.